Reading from the N-terminus, the 163-residue chain is ATP synthase subunit b 1 (163 aa).

The helical transmembrane segment at 5–25 (LDATFFAFVGLVLFLALVVYL) threads the bilayer.

Belongs to the ATPase B chain family. In terms of assembly, F-type ATPases have 2 components, F(1) - the catalytic core - and F(0) - the membrane proton channel. F(1) has five subunits: alpha(3), beta(3), gamma(1), delta(1), epsilon(1). F(0) has three main subunits: a(1), b(2) and c(10-14). The alpha and beta chains form an alternating ring which encloses part of the gamma chain. F(1) is attached to F(0) by a central stalk formed by the gamma and epsilon chains, while a peripheral stalk is formed by the delta and b chains.

The protein localises to the cell inner membrane. In terms of biological role, f(1)F(0) ATP synthase produces ATP from ADP in the presence of a proton or sodium gradient. F-type ATPases consist of two structural domains, F(1) containing the extramembraneous catalytic core and F(0) containing the membrane proton channel, linked together by a central stalk and a peripheral stalk. During catalysis, ATP synthesis in the catalytic domain of F(1) is coupled via a rotary mechanism of the central stalk subunits to proton translocation. Component of the F(0) channel, it forms part of the peripheral stalk, linking F(1) to F(0). This Rhizobium etli (strain CIAT 652) protein is ATP synthase subunit b 1.